Here is a 187-residue protein sequence, read N- to C-terminus: Threonylcarbamoyl-AMP synthase (187 aa).

The 184-residue stretch at 4–187 folds into the YrdC-like domain; it reads TLTLSEAVTA…DARSGHILRL (184 aa).

It belongs to the SUA5 family. TsaC subfamily.

Its subcellular location is the cytoplasm. The catalysed reaction is L-threonine + hydrogencarbonate + ATP = L-threonylcarbamoyladenylate + diphosphate + H2O. Functionally, required for the formation of a threonylcarbamoyl group on adenosine at position 37 (t(6)A37) in tRNAs that read codons beginning with adenine. Catalyzes the conversion of L-threonine, HCO(3)(-)/CO(2) and ATP to give threonylcarbamoyl-AMP (TC-AMP) as the acyladenylate intermediate, with the release of diphosphate. This chain is Threonylcarbamoyl-AMP synthase, found in Xylella fastidiosa (strain M23).